The primary structure comprises 447 residues: Interferon-induced protein 44-like (447 aa).

The region spanning 1 to 159 (MKVTARLTWI…PVECEIFRVD (159 aa)) is the TLDc domain.

The protein belongs to the IFI44 family. HA-28 antigen forms a complex with Kb MHC in BALB.B donor cells. Interacts with FKBP5; this interaction modulates IKBKB and IKBKE kinase activities. As to expression, expressed on cells of the hematopoietic lineage. Detected in transformed cell lines of the macrophage and B-cell lineage. Expressed in spleen and bone marrow.

It is found in the cytoplasm. Type I interferon-stimulated gene (ISG) that plays a critical role in antiviral and antibacterial activity. During bacterial infection, promotes macrophage differentiation and facilitates inflammatory cytokine secretion. Plays a role in the control of respiratory syncycial virus/RSV infection, reducing the ability of the virus to replicate. Acts as a feedback regulator of IFN responses by negatively regulating IKBKB kinase activity through interaction with FKBP5. Its function is as follows. Precursor of the histocompatibility antigen HA-28 in BALB.B mice. More generally, minor histocompatibility antigens refer to immunogenic peptide which, when complexed with MHC, can generate an immune response after recognition by specific T-cells. The peptides are derived from polymorphic intracellular proteins, which are cleaved by normal pathways of antigen processing. The binding of these peptides to MHC molecules and its expression on the cell surface can stimulate T-cell responses and thereby trigger graft rejection or graft-versus-host disease (GVHD). More specifically, HA-28 minor antigen is transcribed in the BALB.B donor but not in host C57BL/6 cells. HA-28 is presented to the donor BALB.B cell surface by Kb MHC. This complex HA-28/Kb MHC elicits cytotoxic T-cell response in C57BL/6 mice immunized with BALB.B spleen cells. It induces C57BL/6 mice cells recognition and lysis by CD8 T-cell from BALB.B mice. This is Interferon-induced protein 44-like (Ifi44l) from Mus musculus (Mouse).